An 80-amino-acid polypeptide reads, in one-letter code: Sulfur carrier protein TusA (80 aa).

Cys-17 (cysteine persulfide intermediate) is an active-site residue.

The protein belongs to the sulfur carrier protein TusA family.

It is found in the cytoplasm. In terms of biological role, sulfur carrier protein which probably makes part of a sulfur-relay system. This chain is Sulfur carrier protein TusA, found in Pseudomonas entomophila (strain L48).